Consider the following 361-residue polypeptide: Phosphoserine aminotransferase (361 aa).

L-glutamate is bound at residue arginine 43. Pyridoxal 5'-phosphate-binding positions include 77–78 (AS), tryptophan 103, threonine 153, aspartate 173, and glutamine 196. An N6-(pyridoxal phosphate)lysine modification is found at lysine 197. 238 to 239 (NT) is a binding site for pyridoxal 5'-phosphate.

The protein belongs to the class-V pyridoxal-phosphate-dependent aminotransferase family. SerC subfamily. In terms of assembly, homodimer. The cofactor is pyridoxal 5'-phosphate.

It localises to the cytoplasm. The enzyme catalyses O-phospho-L-serine + 2-oxoglutarate = 3-phosphooxypyruvate + L-glutamate. It catalyses the reaction 4-(phosphooxy)-L-threonine + 2-oxoglutarate = (R)-3-hydroxy-2-oxo-4-phosphooxybutanoate + L-glutamate. It functions in the pathway amino-acid biosynthesis; L-serine biosynthesis; L-serine from 3-phospho-D-glycerate: step 2/3. Its pathway is cofactor biosynthesis; pyridoxine 5'-phosphate biosynthesis; pyridoxine 5'-phosphate from D-erythrose 4-phosphate: step 3/5. Its function is as follows. Catalyzes the reversible conversion of 3-phosphohydroxypyruvate to phosphoserine and of 3-hydroxy-2-oxo-4-phosphonooxybutanoate to phosphohydroxythreonine. The chain is Phosphoserine aminotransferase from Pseudomonas putida (strain ATCC 47054 / DSM 6125 / CFBP 8728 / NCIMB 11950 / KT2440).